Here is a 456-residue protein sequence, read N- to C-terminus: MNYLKEDTIAALSTAAGKSAIAVIRLSGENSFQIIGKIFKTHSKPEQQVKHGYITDGIEKKDEVLCTFFKAPHTYTGENLVEIAAHGNPVIINEILNLLYKNGARPAGPGEFTYRAFLNDKMNLAEAEAVCALITSKTEMSAKAALNSLSGEFSSKIKNIRDAVTNLIASMEANLDHPDEDNMFLSRSEKLSRFDSCIKDVQNLLNSYKTGKILQYGIKVVIIGKPNAGKSSLLNAILGKNRAIVTDIAGTTTDTVEETIDCCGIPLIITDTAGIREHSENLIEILGQAKTREAVCKADILIWLFDSSSEPDCNDAKIADFLKKSDLNIPIICVLNKSDLPPLFSSSLLNRENKVKVKISAKTGVGIADLLDEIVKIAGVSESKNDYLMINTRHFILLQNTLESLIRTKQSLSAKDADEIACFEALSAQISLNEILGINVKQDILDTIFSTFCIGK.

Positions 25, 82, and 121 each coordinate (6S)-5-formyl-5,6,7,8-tetrahydrofolate. The TrmE-type G domain maps to 217–379; the sequence is GIKVVIIGKP…LLDEIVKIAG (163 aa). Asparagine 227 is a K(+) binding site. Residues 227–232, 246–252, and 271–274 each bind GTP; these read NAGKSS, TDIAGTT, and DTAG. Serine 231 contributes to the Mg(2+) binding site. Positions 246, 248, and 251 each coordinate K(+). Mg(2+) is bound at residue threonine 252. Residue lysine 456 coordinates (6S)-5-formyl-5,6,7,8-tetrahydrofolate.

The protein belongs to the TRAFAC class TrmE-Era-EngA-EngB-Septin-like GTPase superfamily. TrmE GTPase family. Homodimer. Heterotetramer of two MnmE and two MnmG subunits. Requires K(+) as cofactor.

It localises to the cytoplasm. Exhibits a very high intrinsic GTPase hydrolysis rate. Involved in the addition of a carboxymethylaminomethyl (cmnm) group at the wobble position (U34) of certain tRNAs, forming tRNA-cmnm(5)s(2)U34. The sequence is that of tRNA modification GTPase MnmE from Endomicrobium trichonymphae.